The sequence spans 897 residues: Cytokine receptor common subunit beta (897 aa).

The N-terminal stretch at Met-1–Cys-16 is a signal peptide. The Extracellular segment spans residues Trp-17–Trp-443. A disulfide bridge connects residues Cys-35 and Cys-45. Asn-58 carries N-linked (GlcNAc...) asparagine glycosylation. 2 disulfide bridges follow: Cys-75–Cys-96 and Cys-86–Cys-91. The region spanning Pro-133 to Gly-240 is the Fibronectin type-III 1 domain. N-linked (GlcNAc...) asparagine glycosylation is present at Asn-191. Disulfide bonds link Cys-250–Cys-260 and Cys-289–Cys-306. In terms of domain architecture, Fibronectin type-III 2 spans Gln-339–Thr-436. Residue Asn-346 is glycosylated (N-linked (GlcNAc...) asparagine). The WSXWS motif motif lies at Trp-425–Ser-429. A helical transmembrane segment spans residues Val-444–Leu-460. At Arg-461–Cys-897 the chain is on the cytoplasmic side. A Box 1 motif motif is present at residues Trp-474 to Ser-482. Disordered regions lie at residues Gly-498–Arg-517, Ser-532–Cys-630, Pro-648–Gly-812, and Pro-830–Lys-849. The span at Glu-564–Pro-574 shows a compositional bias: pro residues. Over residues Ser-723–Pro-752 the composition is skewed to low complexity. Tyr-766 bears the Phosphotyrosine mark. Low complexity predominate over residues Pro-830–Ser-840.

The protein belongs to the type I cytokine receptor family. Type 4 subfamily. Heterodimer of an alpha and a beta subunit. The beta subunit is common to the IL3, IL5 and GM-CSF receptors. The signaling GM-CSF receptor complex is a dodecamer of two head-to-head hexamers of two alpha, two beta, and two ligand subunits. Interacts with TMEM102; this interaction occurs preferentially in the absence of CSF2. Interacts with FCER1G; this interaction is direct. Interacts with LYN. Interacts with JAK1. In terms of processing, may be phosphorylated by LYN.

Its subcellular location is the membrane. Functionally, cell surface receptor that plays a role in immune response and controls the production and differentiation of hematopoietic progenitor cells into lineage-restricted cells. Acts by forming an heterodimeric receptor through interaction with different partners such as IL3RA, IL5RA or CSF2RA. In turn, participates in various signaling pathways including interleukin-3, interleukin-5 and granulocyte-macrophage colony-stimulating factor/CSF2 pathways. In unstimulated conditions, interacts constitutively with JAK1 and ligand binding leads to JAK1 stimulation and subsequent activation of the JAK-STAT pathway. This is Cytokine receptor common subunit beta (CSF2RB) from Homo sapiens (Human).